Consider the following 498-residue polypeptide: O-methyltransferase OME1 (498 aa).

Residues 1–19 are compositionally biased toward polar residues; sequence MSTMALHRTASTKSDTTMA. 2 disordered regions span residues 1–23 and 42–83; these read MSTM…CPNG and HRAE…QPEY. Over residues 50–65 the composition is skewed to low complexity; that stretch reads SSTSSVSTTPTSPSFS. D358 contributes to the S-adenosyl-L-methionine binding site. H406 serves as the catalytic Proton acceptor.

Belongs to the class I-like SAM-binding methyltransferase superfamily. Cation-independent O-methyltransferase family.

The protein operates within secondary metabolite biosynthesis. Its function is as follows. O-methyltransferase; part of the gene cluster that mediates the biosynthesis of a tyrosine-derived cytochalasan acting as a fungal signal recognized by resistant rice plants and leads to avirulence in Pi33 resistant rice cultivars. The first step in the pathway is catalyzed by the hybrid PKS-NRPS ACE1, assisted by the enoyl reductase RAP1, that are responsible for fusion of the tyrosine precursor and the polyketide backbone. The polyketide synthase module (PKS) of ACE1 is responsible for the synthesis of the polyketide backbone and the downstream nonribosomal peptide synthetase (NRPS) amidates the carboxyl end of the polyketide with the tyrosine precursor. Because ACE1 lacks a designated enoylreductase (ER) domain, the required activity is provided the enoyl reductase RAP1. Reduction by the hydrolyase ORFZ, followed by dehydration and intra-molecular Diels-Alder cyclization by the Diels-Alderase ORF3 then yield the required isoindolone-fused macrocycle. A number of oxidative steps catalyzed by the tailoring enzymes identified within the cluster, including cytochrome P450 monooxygenases CYP1 to CYP4, the FAD-linked oxidoreductase OXR2 and the short-chain dehydrogenase/reductase OXR1, are further required to afford the final cytochalasans that confer avirulence and which have still to be identified. The monooxygenase CYP1 has been shown to be a site-selective C-18 hydroxylase whereas the function of CYP3 is the site-selective epoxidation of the C-6/C-7 olefin that is present in some intermediate compounds. Finally, SYN2 and RAP2 are not required for avirulence in Pi33 resistant rice cultivars. The sequence is that of O-methyltransferase OME1 from Pyricularia oryzae (strain 70-15 / ATCC MYA-4617 / FGSC 8958) (Rice blast fungus).